A 203-amino-acid polypeptide reads, in one-letter code: CASP-like protein 4B2 (203 aa).

At 1–57 the chain is on the cytoplasmic side; it reads MAMVTADASAAADAATKQPDVEKDYSSYNGASTAGAGGGGVVESVVARWRREDMLDK. A helical transmembrane segment spans residues 58–78; sequence CPLALHAAAAAFAFVALVLVA. Residues 79 to 92 lie on the Extracellular side of the membrane; it reads SNQHGDWMQFDRYQ. Residues 93-113 form a helical membrane-spanning segment; it reads EYMYLLAIAALAFAYSLAQAL. At 114 to 135 the chain is on the cytoplasmic side; it reads RHAHRMRGGADPIPAPSARLFD. Residues 136–156 form a helical membrane-spanning segment; sequence FIADQVVAYLLMSALSAAIPI. The Extracellular segment spans residues 157 to 171; the sequence is TNRMRTAVINNFTDA. A glycan (N-linked (GlcNAc...) asparagine) is linked at N167. Residues 172–192 form a helical membrane-spanning segment; that stretch reads TAAAISMAFLAFVALALSATV. At 193 to 203 the chain is on the cytoplasmic side; that stretch reads SGYKLSRQMYM.

This sequence belongs to the Casparian strip membrane proteins (CASP) family. Homodimer and heterodimers.

The protein localises to the cell membrane. The sequence is that of CASP-like protein 4B2 from Hordeum vulgare subsp. vulgare (Domesticated barley).